Reading from the N-terminus, the 345-residue chain is N-acetyl-gamma-glutamyl-phosphate reductase (345 aa).

Residue cysteine 149 is part of the active site.

Belongs to the NAGSA dehydrogenase family. Type 1 subfamily.

The protein localises to the cytoplasm. It carries out the reaction N-acetyl-L-glutamate 5-semialdehyde + phosphate + NADP(+) = N-acetyl-L-glutamyl 5-phosphate + NADPH + H(+). It participates in amino-acid biosynthesis; L-arginine biosynthesis; N(2)-acetyl-L-ornithine from L-glutamate: step 3/4. In terms of biological role, catalyzes the NADPH-dependent reduction of N-acetyl-5-glutamyl phosphate to yield N-acetyl-L-glutamate 5-semialdehyde. The protein is N-acetyl-gamma-glutamyl-phosphate reductase of Herminiimonas arsenicoxydans.